The following is a 524-amino-acid chain: 2,3-bisphosphoglycerate-independent phosphoglycerate mutase (524 aa).

Mn(2+) is bound by residues aspartate 13 and serine 63. The active-site Phosphoserine intermediate is serine 63. Substrate-binding positions include histidine 124, 154-155 (RD), arginine 186, arginine 192, 262-265 (RADR), and lysine 337. The Mn(2+) site is built by aspartate 404, histidine 408, aspartate 445, histidine 446, and histidine 464.

It belongs to the BPG-independent phosphoglycerate mutase family. As to quaternary structure, monomer. It depends on Mn(2+) as a cofactor.

The enzyme catalyses (2R)-2-phosphoglycerate = (2R)-3-phosphoglycerate. Its pathway is carbohydrate degradation; glycolysis; pyruvate from D-glyceraldehyde 3-phosphate: step 3/5. Functionally, catalyzes the interconversion of 2-phosphoglycerate and 3-phosphoglycerate. In Thermomicrobium roseum (strain ATCC 27502 / DSM 5159 / P-2), this protein is 2,3-bisphosphoglycerate-independent phosphoglycerate mutase.